A 617-amino-acid chain; its full sequence is Chaperone protein HscA homolog (617 aa).

Belongs to the heat shock protein 70 family.

Functionally, probable chaperone. Has a low intrinsic ATPase activity which is markedly stimulated by HscB. The chain is Chaperone protein HscA homolog from Vibrio vulnificus (strain CMCP6).